A 307-amino-acid chain; its full sequence is Quinolinate synthase (307 aa).

Residues His-20 and Ser-37 each coordinate iminosuccinate. Cys-82 lines the [4Fe-4S] cluster pocket. Iminosuccinate-binding positions include 108 to 110 (YIN) and Ser-125. Residue Cys-168 coordinates [4Fe-4S] cluster. Residues 194-196 (HPE) and Thr-219 each bind iminosuccinate. [4Fe-4S] cluster is bound at residue Cys-264.

The protein belongs to the quinolinate synthase family. Type 2 subfamily. [4Fe-4S] cluster serves as cofactor.

The protein localises to the cytoplasm. The enzyme catalyses iminosuccinate + dihydroxyacetone phosphate = quinolinate + phosphate + 2 H2O + H(+). It functions in the pathway cofactor biosynthesis; NAD(+) biosynthesis; quinolinate from iminoaspartate: step 1/1. Functionally, catalyzes the condensation of iminoaspartate with dihydroxyacetone phosphate to form quinolinate. The polypeptide is Quinolinate synthase (Pyrobaculum aerophilum (strain ATCC 51768 / DSM 7523 / JCM 9630 / CIP 104966 / NBRC 100827 / IM2)).